A 607-amino-acid polypeptide reads, in one-letter code: MNLQEMNARKEKIRNFSIIAHIDHGKSTLADRILEQTETVSKREMQAQLLDSMDLERERGITIKLNAIELNYKAKDGETYIFHLIDTPGHVDFTYEVSRSLAACEGAILVVDAAQGIEAQTLANVYLALDNDLEILPVINKIDLPAADPEMVRQEIEDVIGLDASEAVLASAKAGIGIEEILEQIVEKVPAPQGEVDAPLKALIFDSVYDAYRGVILQIRVIDGSVKVGDRIQLMSNGKEFDVTEVGIFTPKAVARDFLMAGDVGYVAAAIKTVADTRVGDTVTLASNPATEALEGYKEMNPMVFAGIYPIESNKFNDLREALEKLQLNDASLRFEPETSQALGFGFRCGFLGLLHMDVIQERLEREFGIDLIMTAPSVVYHINTTDGETLEVANPSEFPDPTRIENIEEPFVKAQIMVPNDFVGPVMELAQRKRGIFLTMDYLDANRVNIIYHIPLSEIVFDFFDKLKSSTKGYASFDYEISDYRPSNLVKMDILLNAEKVDALSFIVHKDFAFERGKVIVEKLKKLIPRQQFEVPIQATIGNKIVARSDIKALRKNVLAKCYGGDISRKRKLLEKQKAGKKRMKAIGSVEVPQEAFLSVLSMDEE.

Residues 11–193 form the tr-type G domain; sequence EKIRNFSIIA…QIVEKVPAPQ (183 aa). Residues 23-28 and 140-143 each bind GTP; these read DHGKST and NKID.

It belongs to the TRAFAC class translation factor GTPase superfamily. Classic translation factor GTPase family. LepA subfamily.

The protein localises to the cell membrane. It carries out the reaction GTP + H2O = GDP + phosphate + H(+). Its function is as follows. Required for accurate and efficient protein synthesis under certain stress conditions. May act as a fidelity factor of the translation reaction, by catalyzing a one-codon backward translocation of tRNAs on improperly translocated ribosomes. Back-translocation proceeds from a post-translocation (POST) complex to a pre-translocation (PRE) complex, thus giving elongation factor G a second chance to translocate the tRNAs correctly. Binds to ribosomes in a GTP-dependent manner. The chain is Elongation factor 4 from Lactococcus lactis subsp. cremoris (strain SK11).